A 414-amino-acid chain; its full sequence is Serine hydroxymethyltransferase (414 aa).

Residues Leu-117 and 121-123 each bind (6S)-5,6,7,8-tetrahydrofolate; that span reads GHL. Lys-226 bears the N6-(pyridoxal phosphate)lysine mark.

Belongs to the SHMT family. As to quaternary structure, homodimer. Pyridoxal 5'-phosphate is required as a cofactor.

The protein localises to the cytoplasm. The catalysed reaction is (6R)-5,10-methylene-5,6,7,8-tetrahydrofolate + glycine + H2O = (6S)-5,6,7,8-tetrahydrofolate + L-serine. Its pathway is one-carbon metabolism; tetrahydrofolate interconversion. The protein operates within amino-acid biosynthesis; glycine biosynthesis; glycine from L-serine: step 1/1. Its function is as follows. Catalyzes the reversible interconversion of serine and glycine with tetrahydrofolate (THF) serving as the one-carbon carrier. This reaction serves as the major source of one-carbon groups required for the biosynthesis of purines, thymidylate, methionine, and other important biomolecules. Also exhibits THF-independent aldolase activity toward beta-hydroxyamino acids, producing glycine and aldehydes, via a retro-aldol mechanism. This is Serine hydroxymethyltransferase from Dictyoglomus thermophilum (strain ATCC 35947 / DSM 3960 / H-6-12).